The primary structure comprises 62 residues: Conotoxin Pl168 (62 aa).

The N-terminal stretch at 1-21 is a signal peptide; that stretch reads MGMRMMFTVFLLVVLATTVVS. The propeptide occupies 22-40; the sequence is FTLDRASDGANAAADLVAR. 2 cysteine pairs are disulfide-bonded: cysteine 46–cysteine 52 and cysteine 47–cysteine 61.

This sequence belongs to the conotoxin A superfamily. Post-translationally, both Pro-53 and Pro-62 are not in cis/trans isomerization. As to expression, expressed by the venom duct.

The protein resides in the secreted. In terms of biological role, probable neurotoxin with unknown target. Possibly targets ion channels. This chain is Conotoxin Pl168, found in Conus planorbis (Planorbis cone).